The sequence spans 702 residues: Ribosomal RNA large subunit methyltransferase K/L (702 aa).

The region spanning 43–154 is the THUMP domain; it reads LVYQSLMWSR…KETASIALDL (112 aa).

Belongs to the methyltransferase superfamily. RlmKL family.

It localises to the cytoplasm. The catalysed reaction is guanosine(2445) in 23S rRNA + S-adenosyl-L-methionine = N(2)-methylguanosine(2445) in 23S rRNA + S-adenosyl-L-homocysteine + H(+). The enzyme catalyses guanosine(2069) in 23S rRNA + S-adenosyl-L-methionine = N(2)-methylguanosine(2069) in 23S rRNA + S-adenosyl-L-homocysteine + H(+). Specifically methylates the guanine in position 2445 (m2G2445) and the guanine in position 2069 (m7G2069) of 23S rRNA. The protein is Ribosomal RNA large subunit methyltransferase K/L of Escherichia coli O1:K1 / APEC.